Consider the following 313-residue polypeptide: GTPase Era (313 aa).

In terms of domain architecture, Era-type G spans 13–186 (RSGFVSFVGR…ADLLVGLLPE (174 aa)). Positions 21 to 28 (GRPNAGKS) are G1. 21-28 (GRPNAGKS) provides a ligand contact to GTP. The G2 stretch occupies residues 47–51 (QTTRT). The G3 stretch occupies residues 68–71 (DTPG). Residues 68-72 (DTPGL) and 131-134 (TKTD) each bind GTP. The tract at residues 131–134 (TKTD) is G4. Residues 165-167 (VSA) are G5. One can recognise a KH type-2 domain in the interval 217-299 (LRDELPHSVA…YLDLHVKIAK (83 aa)).

It belongs to the TRAFAC class TrmE-Era-EngA-EngB-Septin-like GTPase superfamily. Era GTPase family. Monomer.

Its subcellular location is the cytoplasm. The protein localises to the cell membrane. In terms of biological role, an essential GTPase that binds both GDP and GTP, with rapid nucleotide exchange. Plays a role in 16S rRNA processing and 30S ribosomal subunit biogenesis and possibly also in cell cycle regulation and energy metabolism. This chain is GTPase Era, found in Nocardioides sp. (strain ATCC BAA-499 / JS614).